The chain runs to 428 residues: Serine--tRNA ligase (428 aa).

Position 231–233 (231–233 (TAE)) interacts with L-serine. 262–264 (RSE) is a binding site for ATP. Glu285 provides a ligand contact to L-serine. Residue 349–352 (EISS) participates in ATP binding. Residue Ser385 participates in L-serine binding.

It belongs to the class-II aminoacyl-tRNA synthetase family. Type-1 seryl-tRNA synthetase subfamily. As to quaternary structure, homodimer. The tRNA molecule binds across the dimer.

It localises to the cytoplasm. It catalyses the reaction tRNA(Ser) + L-serine + ATP = L-seryl-tRNA(Ser) + AMP + diphosphate + H(+). It carries out the reaction tRNA(Sec) + L-serine + ATP = L-seryl-tRNA(Sec) + AMP + diphosphate + H(+). It functions in the pathway aminoacyl-tRNA biosynthesis; selenocysteinyl-tRNA(Sec) biosynthesis; L-seryl-tRNA(Sec) from L-serine and tRNA(Sec): step 1/1. Its function is as follows. Catalyzes the attachment of serine to tRNA(Ser). Is also able to aminoacylate tRNA(Sec) with serine, to form the misacylated tRNA L-seryl-tRNA(Sec), which will be further converted into selenocysteinyl-tRNA(Sec). This Staphylococcus aureus (strain USA300) protein is Serine--tRNA ligase.